A 36-amino-acid polypeptide reads, in one-letter code: Dermonecrotic toxin LgSicTox-beta-LOXN1/LOXN7 (36 aa).

This sequence belongs to the arthropod phospholipase D family. Class II subfamily. The cofactor is Mg(2+). Post-translationally, contains 2 disulfide bonds. Expressed by the venom gland.

The protein resides in the secreted. It catalyses the reaction an N-(acyl)-sphingosylphosphocholine = an N-(acyl)-sphingosyl-1,3-cyclic phosphate + choline. The enzyme catalyses an N-(acyl)-sphingosylphosphoethanolamine = an N-(acyl)-sphingosyl-1,3-cyclic phosphate + ethanolamine. It carries out the reaction a 1-acyl-sn-glycero-3-phosphocholine = a 1-acyl-sn-glycero-2,3-cyclic phosphate + choline. The catalysed reaction is a 1-acyl-sn-glycero-3-phosphoethanolamine = a 1-acyl-sn-glycero-2,3-cyclic phosphate + ethanolamine. Dermonecrotic toxins cleave the phosphodiester linkage between the phosphate and headgroup of certain phospholipids (sphingolipid and lysolipid substrates), forming an alcohol (often choline) and a cyclic phosphate. This toxin acts on sphingomyelin (SM). It may also act on ceramide phosphoethanolamine (CPE), lysophosphatidylcholine (LPC) and lysophosphatidylethanolamine (LPE), but not on lysophosphatidylserine (LPS), and lysophosphatidylglycerol (LPG). It acts by transphosphatidylation, releasing exclusively cyclic phosphate products as second products. Induces dermonecrosis, hemolysis, increased vascular permeability, edema, inflammatory response, and platelet aggregation. The protein is Dermonecrotic toxin LgSicTox-beta-LOXN1/LOXN7 of Loxosceles gaucho (Spider).